A 150-amino-acid polypeptide reads, in one-letter code: D-aminoacyl-tRNA deacylase (150 aa).

Positions 138-139 match the Gly-cisPro motif, important for rejection of L-amino acids motif; sequence GP.

It belongs to the DTD family. In terms of assembly, homodimer.

The protein localises to the cytoplasm. The enzyme catalyses glycyl-tRNA(Ala) + H2O = tRNA(Ala) + glycine + H(+). It carries out the reaction a D-aminoacyl-tRNA + H2O = a tRNA + a D-alpha-amino acid + H(+). In terms of biological role, an aminoacyl-tRNA editing enzyme that deacylates mischarged D-aminoacyl-tRNAs. Also deacylates mischarged glycyl-tRNA(Ala), protecting cells against glycine mischarging by AlaRS. Acts via tRNA-based rather than protein-based catalysis; rejects L-amino acids rather than detecting D-amino acids in the active site. By recycling D-aminoacyl-tRNA to D-amino acids and free tRNA molecules, this enzyme counteracts the toxicity associated with the formation of D-aminoacyl-tRNA entities in vivo and helps enforce protein L-homochirality. This Chlorobium limicola (strain DSM 245 / NBRC 103803 / 6330) protein is D-aminoacyl-tRNA deacylase.